A 485-amino-acid polypeptide reads, in one-letter code: Adenosylhomocysteinase 1 (485 aa).

The substrate site is built by threonine 64, aspartate 139, and glutamate 205. Position 206 to 208 (206 to 208) interacts with NAD(+); the sequence is TTT. The substrate site is built by lysine 235 and aspartate 239. Residues 271–276, glutamate 292, 348–350, asparagine 397, histidine 404, lysine 479, 479–483, and tyrosine 483 each bind NAD(+); these read GDVGKG, IGH, and KPPHY.

The protein belongs to the adenosylhomocysteinase family. In terms of assembly, homotetramer. NAD(+) is required as a cofactor.

It carries out the reaction S-adenosyl-L-homocysteine + H2O = L-homocysteine + adenosine. Its pathway is amino-acid biosynthesis; L-homocysteine biosynthesis; L-homocysteine from S-adenosyl-L-homocysteine: step 1/1. Functionally, essential protein during embryogenesis. Adenosylhomocysteine is a competitive inhibitor of S-adenosyl-L-methionine-dependent methyl transferase reactions; therefore adenosylhomocysteinase may play a key role in the control of methylations via regulation of the intracellular concentration of adenosylhomocysteine. Required for DNA methylation-dependent gene silencing. This Arabidopsis thaliana (Mouse-ear cress) protein is Adenosylhomocysteinase 1.